Reading from the N-terminus, the 319-residue chain is 4-hydroxy-3-methylbut-2-enyl diphosphate reductase (319 aa).

Residue C12 coordinates [4Fe-4S] cluster. The (2E)-4-hydroxy-3-methylbut-2-enyl diphosphate site is built by H41 and H74. Dimethylallyl diphosphate is bound by residues H41 and H74. Residues H41 and H74 each coordinate isopentenyl diphosphate. C97 provides a ligand contact to [4Fe-4S] cluster. H125 provides a ligand contact to (2E)-4-hydroxy-3-methylbut-2-enyl diphosphate. H125 contacts dimethylallyl diphosphate. An isopentenyl diphosphate-binding site is contributed by H125. E127 serves as the catalytic Proton donor. Position 168 (T168) interacts with (2E)-4-hydroxy-3-methylbut-2-enyl diphosphate. [4Fe-4S] cluster is bound at residue C198. The (2E)-4-hydroxy-3-methylbut-2-enyl diphosphate site is built by S226, S227, N228, and S270. Residues S226, S227, N228, and S270 each coordinate dimethylallyl diphosphate. Positions 226, 227, 228, and 270 each coordinate isopentenyl diphosphate.

The protein belongs to the IspH family. In terms of assembly, homodimer. The cofactor is [4Fe-4S] cluster.

The catalysed reaction is isopentenyl diphosphate + 2 oxidized [2Fe-2S]-[ferredoxin] + H2O = (2E)-4-hydroxy-3-methylbut-2-enyl diphosphate + 2 reduced [2Fe-2S]-[ferredoxin] + 2 H(+). It catalyses the reaction dimethylallyl diphosphate + 2 oxidized [2Fe-2S]-[ferredoxin] + H2O = (2E)-4-hydroxy-3-methylbut-2-enyl diphosphate + 2 reduced [2Fe-2S]-[ferredoxin] + 2 H(+). Its pathway is isoprenoid biosynthesis; dimethylallyl diphosphate biosynthesis; dimethylallyl diphosphate from (2E)-4-hydroxy-3-methylbutenyl diphosphate: step 1/1. It functions in the pathway isoprenoid biosynthesis; isopentenyl diphosphate biosynthesis via DXP pathway; isopentenyl diphosphate from 1-deoxy-D-xylulose 5-phosphate: step 6/6. Functionally, catalyzes the conversion of 1-hydroxy-2-methyl-2-(E)-butenyl 4-diphosphate (HMBPP) into a mixture of isopentenyl diphosphate (IPP) and dimethylallyl diphosphate (DMAPP). Acts in the terminal step of the DOXP/MEP pathway for isoprenoid precursor biosynthesis. The polypeptide is 4-hydroxy-3-methylbut-2-enyl diphosphate reductase (Hamiltonella defensa subsp. Acyrthosiphon pisum (strain 5AT)).